The following is a 63-amino-acid chain: Large ribosomal subunit protein bL32 (63 aa).

The tract at residues 1 to 22 (MANPKAKMSKSRRDKRRAQFNA) is disordered. Residues 7-18 (KMSKSRRDKRRA) show a composition bias toward basic residues.

It belongs to the bacterial ribosomal protein bL32 family.

In Chlorobium limicola (strain DSM 245 / NBRC 103803 / 6330), this protein is Large ribosomal subunit protein bL32.